We begin with the raw amino-acid sequence, 215 residues long: Eukaryotic translation initiation factor 4E-1 (215 aa).

A disordered region spans residues 1 to 32 (MAEDTETRPASAGAEEREEGEIADDGDGSSAA). Residues 16–27 (EREEGEIADDGD) show a composition bias toward acidic residues. EIF4G-binding regions lie at residues 40-43 (HPLE) and 50-86 (FDNPQGKSRQVAWGSTIHPIHTFSTVEDFWGLYNNIH). MRNA is bound by residues 58–63 (RQVAWG), K90, and 108–109 (WE). An intrachain disulfide couples C113 to C151. Residues 134-143 (HTLLAMIGEQ) are EIF4G-binding. Residues 158–163 (RQKQER) and 203–207 (KRSDK) each bind mRNA.

It belongs to the eukaryotic initiation factor 4E family. In terms of assembly, EIF4F is a multi-subunit complex, the composition of which varies with external and internal environmental conditions. It is composed of at least EIF4A, EIF4E and EIF4G. EIF4E is also known to interact with other partners. In higher plants two isoforms of EIF4F have been identified, named isoform EIF4F and isoform EIF(iso)4F. Isoform EIF4F has subunits p220 and p26, whereas isoform EIF(iso)4F has subunits p82 and p28. According to the redox status, the Cys-113-Cys-151 disulfide bridge may have a role in regulating protein function by affecting its ability to bind capped mRNA.

Its subcellular location is the nucleus. The protein localises to the cytoplasm. In terms of biological role, component of the protein complex eIF4F, which is involved in the recognition of the mRNA cap, ATP-dependent unwinding of 5'-terminal secondary structure and recruitment of mRNA to the ribosome. Recognizes and binds the 7-methylguanosine-containing mRNA cap during an early step in the initiation of protein synthesis and facilitates ribosome binding by inducing the unwinding of the mRNAs secondary structures. The polypeptide is Eukaryotic translation initiation factor 4E-1 (Triticum aestivum (Wheat)).